The following is a 301-amino-acid chain: Probable alpha-L-glutamate ligase 1 (301 aa).

An ATP-grasp domain is found at 104–287; the sequence is LQLLSRKGIG…VTEPIVEYIE (184 aa). Residues Lys-141, 178–179, Asp-187, and 211–213 contribute to the ATP site; these read EY and RSN. Asp-248, Glu-260, and Asn-262 together coordinate Mg(2+). Positions 248, 260, and 262 each coordinate Mn(2+).

It belongs to the RimK family. Mg(2+) is required as a cofactor. The cofactor is Mn(2+).

In Shewanella baltica (strain OS155 / ATCC BAA-1091), this protein is Probable alpha-L-glutamate ligase 1.